We begin with the raw amino-acid sequence, 387 residues long: Phosphoglycerate kinase (387 aa).

Substrate contacts are provided by residues 21-23 (DLN), Arg36, 59-62 (HLGR), Arg113, and Arg146. Residues Lys197, Glu314, and 340-343 (GGDT) contribute to the ATP site.

This sequence belongs to the phosphoglycerate kinase family. As to quaternary structure, monomer.

It localises to the cytoplasm. It carries out the reaction (2R)-3-phosphoglycerate + ATP = (2R)-3-phospho-glyceroyl phosphate + ADP. It functions in the pathway carbohydrate degradation; glycolysis; pyruvate from D-glyceraldehyde 3-phosphate: step 2/5. This chain is Phosphoglycerate kinase, found in Pseudomonas putida (strain ATCC 47054 / DSM 6125 / CFBP 8728 / NCIMB 11950 / KT2440).